Consider the following 208-residue polypeptide: Small ribosomal subunit protein uS4 (208 aa).

The 62-residue stretch at 97-158 (TRLDNVIYRM…RAQKYLCVQE (62 aa)) folds into the S4 RNA-binding domain.

Belongs to the universal ribosomal protein uS4 family. As to quaternary structure, part of the 30S ribosomal subunit. Contacts protein S5. The interaction surface between S4 and S5 is involved in control of translational fidelity.

Functionally, one of the primary rRNA binding proteins, it binds directly to 16S rRNA where it nucleates assembly of the body of the 30S subunit. With S5 and S12 plays an important role in translational accuracy. The chain is Small ribosomal subunit protein uS4 from Xylella fastidiosa (strain 9a5c).